Here is a 130-residue protein sequence, read N- to C-terminus: Cystatin (130 aa).

Residues 1–19 (MEWKIVVPLLAVAFTVANA) form the signal peptide. A Secondary area of contact motif is present at residues 67–71 (QVVSG). 2 disulfide bridges follow: cysteine 85–cysteine 94 and cysteine 108–cysteine 128.

It belongs to the cystatin family. Ubiquitous expression including brain, white muscle, heart, gill, kidney, spleen, liver and skin with the highest and lowest level in brain and gill, respectively.

The protein resides in the secreted. Functionally, cysteine proteinase inhibitor. The polypeptide is Cystatin (Oncorhynchus keta (Chum salmon)).